We begin with the raw amino-acid sequence, 189 residues long: Probable nicotinate-nucleotide adenylyltransferase (189 aa).

The protein belongs to the NadD family.

It carries out the reaction nicotinate beta-D-ribonucleotide + ATP + H(+) = deamido-NAD(+) + diphosphate. The protein operates within cofactor biosynthesis; NAD(+) biosynthesis; deamido-NAD(+) from nicotinate D-ribonucleotide: step 1/1. Functionally, catalyzes the reversible adenylation of nicotinate mononucleotide (NaMN) to nicotinic acid adenine dinucleotide (NaAD). The polypeptide is Probable nicotinate-nucleotide adenylyltransferase (Bacillus cereus (strain AH820)).